The sequence spans 86 residues: Sodium channel neurotoxin MeuNaTxalpha-5 (86 aa).

An N-terminal signal peptide occupies residues 1 to 19 (MNYLILISFALLVITGVES). One can recognise an LCN-type CS-alpha/beta domain in the interval 21-85 (RDAYIAKPHN…VPIRIPGKCH (65 aa)). Disulfide bonds link cysteine 31-cysteine 84, cysteine 35-cysteine 57, cysteine 43-cysteine 67, and cysteine 47-cysteine 69. Residue arginine 86 is a propeptide, removed by a carboxypeptidase.

It belongs to the long (4 C-C) scorpion toxin superfamily. Sodium channel inhibitor family. Alpha subfamily. As to expression, expressed by the venom gland.

It localises to the secreted. Its function is as follows. Alpha toxins bind voltage-independently at site-3 of sodium channels (Nav) and inhibit the inactivation of the activated channels, thereby blocking neuronal transmission. This toxin inhibits inactivation of Nav1.6/SCN8A (EC(50)=790 nM) and drosophila DmNav1 (EC(50)=280 nM). The toxin (1 uM) does not significantly shift the midpoint of activation at the two channels, but induces a significant depolarizing shift in the V(1/2) of inactivation of the channels. Has antimicrobial activity. The polypeptide is Sodium channel neurotoxin MeuNaTxalpha-5 (Mesobuthus eupeus (Lesser Asian scorpion)).